The chain runs to 454 residues: Bifunctional protein GlmU (454 aa).

Residues 1-226 are pyrophosphorylase; sequence MSLNVVILAA…PIETEGANNR (226 aa). UDP-N-acetyl-alpha-D-glucosamine is bound by residues 8-11, Lys22, Gln73, 78-79, 100-102, Gly137, Glu151, Asn166, and Asn224; these read LAAG, GT, and YGD. Residue Asp102 coordinates Mg(2+). Asn224 lines the Mg(2+) pocket. The linker stretch occupies residues 227–247; that stretch reads VQLAALERAYQARRAEELMLA. Residues 248–454 are N-acetyltransferase; it reads GANLRDPARI…GWQRPVKKPK (207 aa). UDP-N-acetyl-alpha-D-glucosamine-binding residues include Arg330 and Lys348. His360 acts as the Proton acceptor in catalysis. Tyr363 and Asn374 together coordinate UDP-N-acetyl-alpha-D-glucosamine. Residues Ala377, 383–384, Ser402, Ala420, and Arg437 each bind acetyl-CoA; that span reads NY.

In the N-terminal section; belongs to the N-acetylglucosamine-1-phosphate uridyltransferase family. The protein in the C-terminal section; belongs to the transferase hexapeptide repeat family. As to quaternary structure, homotrimer. Mg(2+) serves as cofactor.

The protein resides in the cytoplasm. The catalysed reaction is alpha-D-glucosamine 1-phosphate + acetyl-CoA = N-acetyl-alpha-D-glucosamine 1-phosphate + CoA + H(+). The enzyme catalyses N-acetyl-alpha-D-glucosamine 1-phosphate + UTP + H(+) = UDP-N-acetyl-alpha-D-glucosamine + diphosphate. Its pathway is nucleotide-sugar biosynthesis; UDP-N-acetyl-alpha-D-glucosamine biosynthesis; N-acetyl-alpha-D-glucosamine 1-phosphate from alpha-D-glucosamine 6-phosphate (route II): step 2/2. It participates in nucleotide-sugar biosynthesis; UDP-N-acetyl-alpha-D-glucosamine biosynthesis; UDP-N-acetyl-alpha-D-glucosamine from N-acetyl-alpha-D-glucosamine 1-phosphate: step 1/1. The protein operates within bacterial outer membrane biogenesis; LPS lipid A biosynthesis. In terms of biological role, catalyzes the last two sequential reactions in the de novo biosynthetic pathway for UDP-N-acetylglucosamine (UDP-GlcNAc). The C-terminal domain catalyzes the transfer of acetyl group from acetyl coenzyme A to glucosamine-1-phosphate (GlcN-1-P) to produce N-acetylglucosamine-1-phosphate (GlcNAc-1-P), which is converted into UDP-GlcNAc by the transfer of uridine 5-monophosphate (from uridine 5-triphosphate), a reaction catalyzed by the N-terminal domain. In Shewanella amazonensis (strain ATCC BAA-1098 / SB2B), this protein is Bifunctional protein GlmU.